Consider the following 529-residue polypeptide: Phenylalanine N-monooxygenase (529 aa).

Residues 1-21 (MLDSTPMLAFIIGLLLLALTM) traverse the membrane as a helical segment. Heme is bound at residue C467.

It belongs to the cytochrome P450 family. Heme serves as cofactor.

The protein localises to the endoplasmic reticulum membrane. The enzyme catalyses L-phenylalanine + 2 reduced [NADPH--hemoprotein reductase] + 2 O2 = (E)-phenylacetaldehyde oxime + 2 oxidized [NADPH--hemoprotein reductase] + CO2 + 3 H2O + 2 H(+). Its pathway is secondary metabolite biosynthesis; phenylglucosinolate biosynthesis. Its function is as follows. Converts L-phenylalanine into phenylacetaldoxime, the precursor of benzylglucosinolate (glucotropeolin). The polypeptide is Phenylalanine N-monooxygenase (CYP79A2) (Arabidopsis thaliana (Mouse-ear cress)).